The chain runs to 151 residues: Large ribosomal subunit protein uL13 (151 aa).

The interval 126-151 (YPGPNHPHQAQKPEELTLNTIPNGDK) is disordered. The segment covering 142–151 (TLNTIPNGDK) has biased composition (polar residues).

The protein belongs to the universal ribosomal protein uL13 family. As to quaternary structure, part of the 50S ribosomal subunit.

Functionally, this protein is one of the early assembly proteins of the 50S ribosomal subunit, although it is not seen to bind rRNA by itself. It is important during the early stages of 50S assembly. This chain is Large ribosomal subunit protein uL13, found in Crocosphaera subtropica (strain ATCC 51142 / BH68) (Cyanothece sp. (strain ATCC 51142)).